The following is a 174-amino-acid chain: Gamma-crystallin D (174 aa).

2 Beta/gamma crystallin 'Greek key' domains span residues glycine 2–serine 40 and glycine 41–proline 83. The segment at tyrosine 84 to serine 87 is connecting peptide. Beta/gamma crystallin 'Greek key' domains follow at residues histidine 88–aspartate 128 and glycine 129–isoleucine 171.

Belongs to the beta/gamma-crystallin family. Monomer.

Crystallins are the dominant structural components of the vertebrate eye lens. This chain is Gamma-crystallin D (CRYGD), found in Macropus fuliginosus (Western gray kangaroo).